A 112-amino-acid polypeptide reads, in one-letter code: Large ribosomal subunit protein P1 (112 aa).

Residues 80–112 (AAAAPAAESKKEEKKKEEESDQSDDDMGFGLFD) are disordered. A compositionally biased stretch (basic and acidic residues) spans 87–97 (ESKKEEKKKEE). Ser99 and Ser102 each carry phosphoserine.

Belongs to the eukaryotic ribosomal protein P1/P2 family. As to quaternary structure, P1 and P2 exist as dimers at the large ribosomal subunit.

In terms of biological role, plays an important role in the elongation step of protein synthesis. The polypeptide is Large ribosomal subunit protein P1 (RpLP1) (Drosophila melanogaster (Fruit fly)).